Consider the following 293-residue polypeptide: tRNA pseudouridine synthase B (293 aa).

Aspartate 39 functions as the Nucleophile in the catalytic mechanism.

The protein belongs to the pseudouridine synthase TruB family. Type 1 subfamily.

It catalyses the reaction uridine(55) in tRNA = pseudouridine(55) in tRNA. In terms of biological role, responsible for synthesis of pseudouridine from uracil-55 in the psi GC loop of transfer RNAs. This is tRNA pseudouridine synthase B from Streptococcus thermophilus (strain ATCC BAA-250 / LMG 18311).